We begin with the raw amino-acid sequence, 253 residues long: Indole-3-glycerol phosphate synthase (253 aa).

This sequence belongs to the TrpC family.

It catalyses the reaction 1-(2-carboxyphenylamino)-1-deoxy-D-ribulose 5-phosphate + H(+) = (1S,2R)-1-C-(indol-3-yl)glycerol 3-phosphate + CO2 + H2O. The protein operates within amino-acid biosynthesis; L-tryptophan biosynthesis; L-tryptophan from chorismate: step 4/5. The chain is Indole-3-glycerol phosphate synthase from Bacillus cereus (strain ATCC 10987 / NRS 248).